Reading from the N-terminus, the 549-residue chain is Dihydroxy-acid dehydratase (549 aa).

Asp78 serves as a coordination point for Mg(2+). [2Fe-2S] cluster is bound at residue Cys119. Mg(2+) contacts are provided by Asp120 and Lys121. Lys121 bears the N6-carboxylysine mark. Position 191 (Cys191) interacts with [2Fe-2S] cluster. Residue Glu441 coordinates Mg(2+). Ser466 (proton acceptor) is an active-site residue.

It belongs to the IlvD/Edd family. Homodimer. [2Fe-2S] cluster is required as a cofactor. Requires Mg(2+) as cofactor.

It catalyses the reaction (2R)-2,3-dihydroxy-3-methylbutanoate = 3-methyl-2-oxobutanoate + H2O. It carries out the reaction (2R,3R)-2,3-dihydroxy-3-methylpentanoate = (S)-3-methyl-2-oxopentanoate + H2O. The protein operates within amino-acid biosynthesis; L-isoleucine biosynthesis; L-isoleucine from 2-oxobutanoate: step 3/4. Its pathway is amino-acid biosynthesis; L-valine biosynthesis; L-valine from pyruvate: step 3/4. Functionally, functions in the biosynthesis of branched-chain amino acids. Catalyzes the dehydration of (2R,3R)-2,3-dihydroxy-3-methylpentanoate (2,3-dihydroxy-3-methylvalerate) into 2-oxo-3-methylpentanoate (2-oxo-3-methylvalerate) and of (2R)-2,3-dihydroxy-3-methylbutanoate (2,3-dihydroxyisovalerate) into 2-oxo-3-methylbutanoate (2-oxoisovalerate), the penultimate precursor to L-isoleucine and L-valine, respectively. The polypeptide is Dihydroxy-acid dehydratase (Methanothermobacter thermautotrophicus (strain ATCC 29096 / DSM 1053 / JCM 10044 / NBRC 100330 / Delta H) (Methanobacterium thermoautotrophicum)).